The primary structure comprises 83 residues: Putative membrane protein insertion efficiency factor (83 aa).

Belongs to the UPF0161 family.

The protein localises to the cell membrane. Could be involved in insertion of integral membrane proteins into the membrane. In Staphylococcus saprophyticus subsp. saprophyticus (strain ATCC 15305 / DSM 20229 / NCIMB 8711 / NCTC 7292 / S-41), this protein is Putative membrane protein insertion efficiency factor.